Reading from the N-terminus, the 61-residue chain is Small ribosomal subunit protein uS14 (61 aa).

Residues cysteine 24, cysteine 27, cysteine 40, and cysteine 43 each contribute to the Zn(2+) site.

The protein belongs to the universal ribosomal protein uS14 family. Zinc-binding uS14 subfamily. As to quaternary structure, part of the 30S ribosomal subunit. Contacts proteins S3 and S10. It depends on Zn(2+) as a cofactor.

Functionally, binds 16S rRNA, required for the assembly of 30S particles and may also be responsible for determining the conformation of the 16S rRNA at the A site. The polypeptide is Small ribosomal subunit protein uS14 (Clostridium acetobutylicum (strain ATCC 824 / DSM 792 / JCM 1419 / IAM 19013 / LMG 5710 / NBRC 13948 / NRRL B-527 / VKM B-1787 / 2291 / W)).